Consider the following 278-residue polypeptide: Short-chain dehydrogenase RED2 (278 aa).

The NADP(+) site is built by Ile15, Asp70, Arg132, Tyr178, Lys182, Val211, and Thr213. The active-site Proton donor is Tyr178. Lys182 functions as the Lowers pKa of active site Tyr in the catalytic mechanism.

Belongs to the short-chain dehydrogenases/reductases (SDR) family.

It functions in the pathway polyketide biosynthesis. In terms of biological role, short-chain dehydrogenase; part of the gene cluster that mediates the biosynthesis of pyriculol and pyriculariol, two heptaketides that induce lesion formation upon application on rice leaves but are dispensable for pathogenicity. The highly reducing polyketide synthase synthesizes the heptaketide backbone of pyriculol and pyriculariol. Pyriculol and pyriculariol contain several hydroxyl moieties and double bonds, so it can be assumed that several reduction steps occur during biosynthesis. These reactions could be executed by PKS19 itself or partly by the tailoring enzymes OXR1, OXR2, RED1, RED2 or RED3, identified within the cluster. The FAD-linked oxidoreductase OXR1 is the only tailoring enzyme for which the function has been determined yet, and is involved in the oxidation of dihydropyriculol and dihydropyriculariol into pyriculol and pyriculariol, respectively. The sequence is that of Short-chain dehydrogenase RED2 from Pyricularia oryzae (strain 70-15 / ATCC MYA-4617 / FGSC 8958) (Rice blast fungus).